A 647-amino-acid chain; its full sequence is Pre-mRNA-splicing factor SLU7 (647 aa).

Residues 1–19 show a composition bias toward polar residues; sequence MASYKQNLPPSALIKQQVN. Residues 1–44 are disordered; that stretch reads MASYKQNLPPSALIKQQVNVADKKSKAEVQRDRQLEEDRKAGTA. The segment covering 21-41 has biased composition (basic and acidic residues); the sequence is ADKKSKAEVQRDRQLEEDRKA. The CCHC-type zinc-finger motif lies at 113–130; it reads GACENCGAMGHQKRDCFD. 2 disordered regions span residues 193–212 and 465–620; these read HEMK…APKD and EVKE…KEME. A compositionally biased stretch (basic and acidic residues) spans 465 to 479; that stretch reads EVKEEKEKEDSIKDE. The segment covering 480–491 has biased composition (acidic residues); it reads VAEENSDNDNDE. The segment covering 513-533 has biased composition (basic and acidic residues); sequence EKEREKERLIEKERRERDQRR. Over residues 534 to 555 the composition is skewed to basic residues; it reads RDKKREKRERKKAKLGKRKRRH. Residues 588-606 show a composition bias toward basic and acidic residues; it reads EKAEGMKAAREGDRGRKYN.

Belongs to the SLU7 family.

The protein resides in the nucleus. In terms of biological role, participates in the second catalytic step of pre-mRNA splicing, when the free hydroxyl group of exon I attacks the 3'-splice site to generate spliced mRNA and the excised lariat intron. This chain is Pre-mRNA-splicing factor SLU7, found in Caenorhabditis elegans.